Here is a 386-residue protein sequence, read N- to C-terminus: Succinate--CoA ligase [ADP-forming] subunit beta (386 aa).

The region spanning 9–244 (KEILRKYGVP…HDEEDPLETR (236 aa)) is the ATP-grasp domain. ATP contacts are provided by residues Lys-46, 53 to 55 (GRG), Glu-99, Cys-102, and Glu-107. Residues Asn-199 and Asp-213 each coordinate Mg(2+). Residues Asn-264 and 321 to 323 (GIM) contribute to the substrate site.

It belongs to the succinate/malate CoA ligase beta subunit family. In terms of assembly, heterotetramer of two alpha and two beta subunits. The cofactor is Mg(2+).

It carries out the reaction succinate + ATP + CoA = succinyl-CoA + ADP + phosphate. The catalysed reaction is GTP + succinate + CoA = succinyl-CoA + GDP + phosphate. It functions in the pathway carbohydrate metabolism; tricarboxylic acid cycle; succinate from succinyl-CoA (ligase route): step 1/1. Functionally, succinyl-CoA synthetase functions in the citric acid cycle (TCA), coupling the hydrolysis of succinyl-CoA to the synthesis of either ATP or GTP and thus represents the only step of substrate-level phosphorylation in the TCA. The beta subunit provides nucleotide specificity of the enzyme and binds the substrate succinate, while the binding sites for coenzyme A and phosphate are found in the alpha subunit. This is Succinate--CoA ligase [ADP-forming] subunit beta from Rickettsia rickettsii (strain Iowa).